Consider the following 139-residue polypeptide: ATP synthase epsilon chain (139 aa).

This sequence belongs to the ATPase epsilon chain family. As to quaternary structure, F-type ATPases have 2 components, CF(1) - the catalytic core - and CF(0) - the membrane proton channel. CF(1) has five subunits: alpha(3), beta(3), gamma(1), delta(1), epsilon(1). CF(0) has three main subunits: a, b and c.

Its subcellular location is the cell inner membrane. Functionally, produces ATP from ADP in the presence of a proton gradient across the membrane. This chain is ATP synthase epsilon chain, found in Pseudomonas putida (strain ATCC 700007 / DSM 6899 / JCM 31910 / BCRC 17059 / LMG 24140 / F1).